The chain runs to 219 residues: OVARIAN TUMOR DOMAIN-containing deubiquitinating enzyme 12 (219 aa).

The region spanning 79-203 (LCELKVSGDG…EVHYNSLYDI (125 aa)) is the OTU domain. The active site involves aspartate 87. The active-site Nucleophile is cysteine 90. Histidine 196 is an active-site residue.

The protein belongs to the peptidase C85 family.

It carries out the reaction Thiol-dependent hydrolysis of ester, thioester, amide, peptide and isopeptide bonds formed by the C-terminal Gly of ubiquitin (a 76-residue protein attached to proteins as an intracellular targeting signal).. Its function is as follows. Hydrolase that can remove conjugated ubiquitin from proteins in vitro and may therefore play an important regulatory role at the level of protein turnover by preventing degradation. Inactive cysteine protease. In Arabidopsis thaliana (Mouse-ear cress), this protein is OVARIAN TUMOR DOMAIN-containing deubiquitinating enzyme 12.